The primary structure comprises 145 residues: uncharacterized protein (145 aa).

Transmembrane regions (helical) follow at residues leucine 20 to phenylalanine 40 and methionine 116 to alanine 136.

It is found in the membrane. This is an uncharacterized protein from Saccharomyces cerevisiae (strain ATCC 204508 / S288c) (Baker's yeast).